Here is a 543-residue protein sequence, read N- to C-terminus: Excitatory amino acid transporter 1 (543 aa).

The Cytoplasmic portion of the chain corresponds to 1–47; it reads MTKSNGEEPRMGSRMERFQQGVRKRTLLAKKKVQNITKEDVKSYLFR. A helical membrane pass occupies residues 48–68; that stretch reads NAFVLLTVSAVIVGTILGFAL. Over 69–86 the chain is Extracellular; sequence RPYKMSYREVKYFSFPGE. Residues 87 to 108 traverse the membrane as a helical segment; the sequence is LLMRMLQMLVLPLIISSLVTGM. The Cytoplasmic portion of the chain corresponds to 109-122; sequence AALDSKASGKMGMR. The helical transmembrane segment at 123 to 145 threads the bilayer; sequence AVVYYMTTTIIAVVIGIIIVIII. Over 146–236 the chain is Extracellular; that stretch reads HPGKGTKENM…IREEMVPVPG (91 aa). A helical membrane pass occupies residues 237–260; it reads SVNGVNALGLVVFSMCFGFVIGNM. At 261-269 the chain is on the cytoplasmic side; it reads KEQGQALRE. The helical transmembrane segment at 270 to 297 threads the bilayer; sequence FFDSLNEAIMRLVAVIMWYAPLGILFLI. The Extracellular segment spans residues 298–318; sequence AGKILEMEDMGVIGGQLAMYT. Residues 319–340 traverse the membrane as a helical segment; sequence VTVIVGLLIHAVIVLPLLYFLV. At 341 to 345 the chain is on the cytoplasmic side; sequence TRKNP. Residues 346 to 376 constitute an intramembrane region (discontinuously helical); the sequence is WVFIGGLLQALITALGTSSSSATLPITFKCL. L-aspartate is bound at residue 363 to 365; sequence SSS. Residues 377-385 are Cytoplasmic-facing; the sequence is EENNGVDKR. A helical transmembrane segment spans residues 386–412; that stretch reads ITRFVLPVGATINMDGTALYEALAAIF. Na(+) is bound by residues Gly394, Thr396, and Asn398. Residue Thr402 participates in L-aspartate binding. Topologically, residues 413–425 are extracellular; sequence IAQVNNFDLNFGQ. Positions 426–459 form an intramembrane region, discontinuously helical; it reads IITISITATAASIGAAGIPQAGLVTMVIVLTSVG. L-aspartate is bound at residue 443-447; that stretch reads IPQAG. Over 460 to 472 the chain is Extracellular; that stretch reads LPTDDITLIIAVD. A helical transmembrane segment spans residues 473-494; it reads WFLDRLRTTTNVLGDSLGAGIV. The L-aspartate site is built by Asp476 and Asn483. The Na(+) site is built by Asn483 and Asp487. The Cytoplasmic segment spans residues 495-543; it reads EHLSRHELKNRDVEMGNSVIEENEMKKPYQLIAQDNEPEKPVADSETKM. Phosphoserine is present on Ser512. The segment at 522–543 is disordered; the sequence is PYQLIAQDNEPEKPVADSETKM. The segment covering 531–543 has biased composition (basic and acidic residues); that stretch reads EPEKPVADSETKM.

This sequence belongs to the dicarboxylate/amino acid:cation symporter (DAACS) (TC 2.A.23) family. SLC1A3 subfamily. In terms of assembly, homotrimer. In terms of processing, glycosylated. Detected in brain and cerebellum. Both isoform GLAST-1 and GLAST-1A are expressed in bone and brain. In brain isoform GLAST-1 is highly enriched in the Purkinje cell layer in cerebellum.

It is found in the cell membrane. It catalyses the reaction K(+)(in) + L-glutamate(out) + 3 Na(+)(out) + H(+)(out) = K(+)(out) + L-glutamate(in) + 3 Na(+)(in) + H(+)(in). The enzyme catalyses K(+)(in) + L-aspartate(out) + 3 Na(+)(out) + H(+)(out) = K(+)(out) + L-aspartate(in) + 3 Na(+)(in) + H(+)(in). The catalysed reaction is D-aspartate(out) + K(+)(in) + 3 Na(+)(out) + H(+)(out) = D-aspartate(in) + K(+)(out) + 3 Na(+)(in) + H(+)(in). In terms of biological role, sodium-dependent, high-affinity amino acid transporter that mediates the uptake of L-glutamate and also L-aspartate and D-aspartate. Functions as a symporter that transports one amino acid molecule together with two or three Na(+) ions and one proton, in parallel with the counter-transport of one K(+) ion. Plays a redundant role in the rapid removal of released glutamate from the synaptic cleft, which is essential for terminating the postsynaptic action of glutamate. In Rattus norvegicus (Rat), this protein is Excitatory amino acid transporter 1 (Slc1a3).